A 726-amino-acid chain; its full sequence is Peroxisomal fatty acid beta-oxidation multifunctional protein (726 aa).

It in the N-terminal section; belongs to the enoyl-CoA hydratase/isomerase family. This sequence in the central section; belongs to the 3-hydroxyacyl-CoA dehydrogenase family. In terms of assembly, monomer.

The protein localises to the peroxisome. It localises to the cytoplasm. Its subcellular location is the cytoskeleton. The catalysed reaction is a (3S)-3-hydroxyacyl-CoA = a (2E)-enoyl-CoA + H2O. The enzyme catalyses a 4-saturated-(3S)-3-hydroxyacyl-CoA = a (3E)-enoyl-CoA + H2O. It catalyses the reaction a (3Z)-enoyl-CoA = a 4-saturated (2E)-enoyl-CoA. It carries out the reaction a (3E)-enoyl-CoA = a 4-saturated (2E)-enoyl-CoA. The catalysed reaction is (3S)-3-hydroxybutanoyl-CoA = (3R)-3-hydroxybutanoyl-CoA. The enzyme catalyses a (3S)-3-hydroxyacyl-CoA + NAD(+) = a 3-oxoacyl-CoA + NADH + H(+). It functions in the pathway lipid metabolism; fatty acid beta-oxidation. Multifunctional enzyme involved in fatty acid beta-oxidation. Also binds to RNA and microtubules. Possible role in subcellular mRNA localization and RNA-cytoskeleton interactions. The sequence is that of Peroxisomal fatty acid beta-oxidation multifunctional protein (MFP) from Oryza sativa subsp. japonica (Rice).